The primary structure comprises 664 residues: UvrABC system protein B (664 aa).

The Helicase ATP-binding domain maps to 23–180 (EGLNRGMRFQ…EKLAKIGYQR (158 aa)). 36-43 (GVTGSGKT) serves as a coordination point for ATP. Positions 89–112 (YYDYYQPEAYIPTKDLYIEKNADI) match the Beta-hairpin motif. Positions 426 to 588 (QVDDLINEIV…ITPRSIVKPL (163 aa)) constitute a Helicase C-terminal domain. A UVR domain is found at 622–657 (EEYVALLEEEMYRAASELRYEDAAALRDELFRVKET).

The protein belongs to the UvrB family. Forms a heterotetramer with UvrA during the search for lesions. Interacts with UvrC in an incision complex.

Its subcellular location is the cytoplasm. Functionally, the UvrABC repair system catalyzes the recognition and processing of DNA lesions. A damage recognition complex composed of 2 UvrA and 2 UvrB subunits scans DNA for abnormalities. Upon binding of the UvrA(2)B(2) complex to a putative damaged site, the DNA wraps around one UvrB monomer. DNA wrap is dependent on ATP binding by UvrB and probably causes local melting of the DNA helix, facilitating insertion of UvrB beta-hairpin between the DNA strands. Then UvrB probes one DNA strand for the presence of a lesion. If a lesion is found the UvrA subunits dissociate and the UvrB-DNA preincision complex is formed. This complex is subsequently bound by UvrC and the second UvrB is released. If no lesion is found, the DNA wraps around the other UvrB subunit that will check the other stand for damage. This chain is UvrABC system protein B, found in Thermotoga neapolitana (strain ATCC 49049 / DSM 4359 / NBRC 107923 / NS-E).